The primary structure comprises 312 residues: Ribosomal RNA small subunit methyltransferase H (312 aa).

Residues 30–32, D50, F80, D98, and Q105 contribute to the S-adenosyl-L-methionine site; that span reads GGH.

The protein belongs to the methyltransferase superfamily. RsmH family.

The protein resides in the cytoplasm. The catalysed reaction is cytidine(1402) in 16S rRNA + S-adenosyl-L-methionine = N(4)-methylcytidine(1402) in 16S rRNA + S-adenosyl-L-homocysteine + H(+). Functionally, specifically methylates the N4 position of cytidine in position 1402 (C1402) of 16S rRNA. This Lawsonia intracellularis (strain PHE/MN1-00) protein is Ribosomal RNA small subunit methyltransferase H.